Here is a 1203-residue protein sequence, read N- to C-terminus: Regulator of telomere elongation helicase 1 (1203 aa).

The Helicase ATP-binding domain maps to 7–296 (NGVTVDFPFQ…ARVTQQGELQ (290 aa)). ATP is bound at residue 42–49 (SPTGTGKT). Residues Cys145, Cys163, Cys172, and Cys207 each coordinate [4Fe-4S] cluster. The short motif at 151 to 167 (KKQESNHMQISLCRKKV) is the Nuclear localization signal element. The DEAH box signature appears at 250–253 (DEAH). The short motif at 871–877 (QKGGRKK) is the Nuclear localization signal element. Disordered stretches follow at residues 998–1020 (QLDPGQHLNQGQPHLSAHPTSKG) and 1120–1203 (TTGK…RSKQ). Positions 1004-1020 (HLNQGQPHLSAHPTSKG) are enriched in polar residues. The segment covering 1123 to 1134 (KDLELEGPRDES) has biased composition (basic and acidic residues). The PIP-box signature appears at 1160 to 1167 (QSKISSFF). Residues 1169–1181 (QRPDESVRSDDTT) are compositionally biased toward basic and acidic residues.

The protein belongs to the helicase family. RAD3/XPD subfamily. As to quaternary structure, interacts with TERF1. Interacts (via PIP-box) with PCNA; the interaction is direct and essential for suppressing telomere fragility. Interacts with MMS19; the interaction mediates the association of RTEL1 with the cytosolic iron-sulfur protein assembly (CIA) complex. Widely expressed. Expressed in spleen, thymus, Peyer patches, kidney, and intestine. Not expressed in brain, heart, lung, skeletal muscles, skin and white fat. In the adult gonad, it is highly expressed in the testis, mainly in the spermatogonia and meiotic spermatocytes.

It localises to the nucleus. The catalysed reaction is ATP + H2O = ADP + phosphate + H(+). Its function is as follows. A probable ATP-dependent DNA helicase implicated in telomere-length regulation, DNA repair and the maintenance of genomic stability. Acts as an anti-recombinase to counteract toxic recombination and limit crossover during meiosis. Regulates meiotic recombination and crossover homeostasis by physically dissociating strand invasion events and thereby promotes noncrossover repair by meiotic synthesis dependent strand annealing (SDSA) as well as disassembly of D loop recombination intermediates. Also disassembles T loops and prevents telomere fragility by counteracting telomeric G4-DNA structures, which together ensure the dynamics and stability of the telomere. The protein is Regulator of telomere elongation helicase 1 of Mus musculus (Mouse).